We begin with the raw amino-acid sequence, 208 residues long: Small ribosomal subunit protein uS4 (208 aa).

The S4 RNA-binding domain occupies 99-165 (RRLDNVVFQL…PRLKEILSSL (67 aa)).

It belongs to the universal ribosomal protein uS4 family. As to quaternary structure, part of the 30S ribosomal subunit. Contacts protein S5. The interaction surface between S4 and S5 is involved in control of translational fidelity.

Functionally, one of the primary rRNA binding proteins, it binds directly to 16S rRNA where it nucleates assembly of the body of the 30S subunit. In terms of biological role, with S5 and S12 plays an important role in translational accuracy. This chain is Small ribosomal subunit protein uS4, found in Desulfitobacterium hafniense (strain Y51).